The chain runs to 829 residues: MHYDFKKVEQDIQKKWNFYTDVKKAQCYVLEMFPYPSGNIHMGHLRNYTIGDVIARYKRACGINVFHPIGWDAFGLPAENAALSYNINPQTWTKNNIDNMRCQLKSIGLSYDWNKELATCDADYYKHEQAFFLDFLKCGLAYRKESLVNWDPIDQTVLANEQVIDGKGWRSGAVVEKRKLSQWFLKITDFAEELLNDLKVLDKWPEKVKLMQERWIGRSEGVVVDFEILNINKTLQVFTTCPHTLFGASFIAVSFDHPILQCVSDSDIIQQINDFDKNNLITDASSTVEKFGINSGLVVKHPFLCMNLPVYVVNFVLMDYATGAVFGCPAHDQRDFEFAKKYNLQIKQVVFPEIDIDLGKEAYVGSGTMKNSDFLDGMTVDEAKEAMIAKLQLLGIGDKMTYYRIHDWGISRQRYWGCPIPIIYCEKCGTVPVSRKDLPVTLPQDVDFTKSGNPLDNHPTWKYVKCPSCGMDAERETDTFDTFFESSWYFAAFCGTSSGIDKDTCNMLLPVDYYIGGIEHAVLHLLYSRFFCRALTKCGYFNVKEPFSSLITQGMVCHATYSDAQGNYLFPEEARKMMEEGQHVNVGRAEKMSKSKKNVVNLEYIIDKYGADTARLFILSDTPPDRDIEWLDDGIEGASKYLSKLWRMIVSYDQINLNFNVEDIPEDAIKYRRCVHKIVSDITSDLEFCRLNCAVAKFRELSNILSEMIRTSVNSDVVSEAICILIRVIEPFIPHIAEKLWENIGGKDMLWNQMWPKADTELLIERNVNIAVQVNGKFIRTLTVANNIDNDQLKSMALEMAKNKIGNSVVKNVYIIPKRAVNIVIEKLS.

The 'HIGH' region motif lies at 34 to 44; it reads PYPSGNIHMGH. The short motif at 591-595 is the 'KMSKS' region element; the sequence is KMSKS. Lys-594 serves as a coordination point for ATP.

Belongs to the class-I aminoacyl-tRNA synthetase family.

Its subcellular location is the cytoplasm. The enzyme catalyses tRNA(Leu) + L-leucine + ATP = L-leucyl-tRNA(Leu) + AMP + diphosphate. The chain is Leucine--tRNA ligase from Ehrlichia canis (strain Jake).